Reading from the N-terminus, the 96-residue chain is Elicitor peptide 3 (96 aa).

Residues 1–73 constitute a propeptide that is removed on maturation; sequence MENLRNGEDN…EEEEEDGMTI (73 aa). The segment at 32–96 is disordered; the sequence is SGLESSSSSS…PSSGKGGKHN (65 aa). Residues 35–49 show a composition bias toward low complexity; sequence ESSSSSSSSCDLSSS. Over residues 52–71 the composition is skewed to acidic residues; sequence EEDESIDIKEEEEEEEEDGM.

It belongs to the brassicaceae elicitor peptide family.

Elicitor of plant defense. The polypeptide is Elicitor peptide 3 (PEP3) (Arabidopsis thaliana (Mouse-ear cress)).